The sequence spans 215 residues: N-(5'-phosphoribosyl)anthranilate isomerase (215 aa).

This sequence belongs to the TrpF family.

The enzyme catalyses N-(5-phospho-beta-D-ribosyl)anthranilate = 1-(2-carboxyphenylamino)-1-deoxy-D-ribulose 5-phosphate. It functions in the pathway amino-acid biosynthesis; L-tryptophan biosynthesis; L-tryptophan from chorismate: step 3/5. This chain is N-(5'-phosphoribosyl)anthranilate isomerase, found in Chlorobium phaeobacteroides (strain DSM 266 / SMG 266 / 2430).